We begin with the raw amino-acid sequence, 326 residues long: Vomeronasal type-1 receptor 100 (326 aa).

Over Met1–Thr32 the chain is Extracellular. A helical transmembrane segment spans residues Phe33–Phe53. Residues Lys54–Leu70 are Cytoplasmic-facing. A helical membrane pass occupies residues Leu71–Ile91. Residues Ser92–Leu104 lie on the Extracellular side of the membrane. Cys101 and Cys188 form a disulfide bridge. Residues Val105–Ala127 traverse the membrane as a helical segment. Residues Ile128 to Ser149 lie on the Cytoplasmic side of the membrane. The helical transmembrane segment at Cys150–Ile170 threads the bilayer. Residues Asn171–Asp209 lie on the Extracellular side of the membrane. Asn175 carries an N-linked (GlcNAc...) asparagine glycan. The helical transmembrane segment at Ile210–His230 threads the bilayer. The Cytoplasmic segment spans residues Arg231 to Gln254. Residues Thr255–Cys275 form a helical membrane-spanning segment. The Extracellular segment spans residues Ser276–Thr285. The helical transmembrane segment at Ser286 to Met306 threads the bilayer. Topologically, residues Ser307–Val326 are cytoplasmic.

Belongs to the G-protein coupled receptor 1 family. Expressed in 1-4% of neurons of the vomeronasal organ. Only one pheromone receptor gene may be expressed in a particular neuron. Not expressed in the main olfactory epithelium.

The protein localises to the cell membrane. Its function is as follows. Putative pheromone receptor implicated in the regulation of social as well as reproductive behavior. The protein is Vomeronasal type-1 receptor 100 (Vom1r100) of Rattus norvegicus (Rat).